A 198-amino-acid polypeptide reads, in one-letter code: Phosphoheptose isomerase (198 aa).

The 163-residue stretch at 34–196 (IVEALIRGNK…DDSLFPADHG (163 aa)) folds into the SIS domain. 49–51 (NGG) serves as a coordination point for substrate. Zn(2+) is bound by residues H58 and N62. Residues N62, 91-92 (ND), 117-119 (STS), S122, and Q172 contribute to the substrate site. Residues Q172 and H180 each coordinate Zn(2+).

This sequence belongs to the SIS family. GmhA subfamily. Homotetramer. Zn(2+) is required as a cofactor.

Its subcellular location is the cytoplasm. The enzyme catalyses 2 D-sedoheptulose 7-phosphate = D-glycero-alpha-D-manno-heptose 7-phosphate + D-glycero-beta-D-manno-heptose 7-phosphate. Its pathway is carbohydrate biosynthesis; D-glycero-D-manno-heptose 7-phosphate biosynthesis; D-glycero-alpha-D-manno-heptose 7-phosphate and D-glycero-beta-D-manno-heptose 7-phosphate from sedoheptulose 7-phosphate: step 1/1. Functionally, catalyzes the isomerization of sedoheptulose 7-phosphate in D-glycero-D-manno-heptose 7-phosphate. In Alteromonas mediterranea (strain DSM 17117 / CIP 110805 / LMG 28347 / Deep ecotype), this protein is Phosphoheptose isomerase.